Consider the following 190-residue polypeptide: Threonylcarbamoyl-AMP synthase (190 aa).

The YrdC-like domain maps to 7 to 190 (GDAIAAAIDV…ALTGELFRQG (184 aa)).

Belongs to the SUA5 family. TsaC subfamily.

It is found in the cytoplasm. The enzyme catalyses L-threonine + hydrogencarbonate + ATP = L-threonylcarbamoyladenylate + diphosphate + H2O. Required for the formation of a threonylcarbamoyl group on adenosine at position 37 (t(6)A37) in tRNAs that read codons beginning with adenine. Catalyzes the conversion of L-threonine, HCO(3)(-)/CO(2) and ATP to give threonylcarbamoyl-AMP (TC-AMP) as the acyladenylate intermediate, with the release of diphosphate. The protein is Threonylcarbamoyl-AMP synthase of Escherichia coli O1:K1 / APEC.